Consider the following 60-residue polypeptide: Large ribosomal subunit protein uL30 (60 aa).

The protein belongs to the universal ribosomal protein uL30 family. As to quaternary structure, part of the 50S ribosomal subunit.

In Saccharopolyspora erythraea (strain ATCC 11635 / DSM 40517 / JCM 4748 / NBRC 13426 / NCIMB 8594 / NRRL 2338), this protein is Large ribosomal subunit protein uL30.